The chain runs to 97 residues: Small ribosomal subunit protein bS6 (97 aa).

This sequence belongs to the bacterial ribosomal protein bS6 family.

Its function is as follows. Binds together with bS18 to 16S ribosomal RNA. This Dictyoglomus turgidum (strain DSM 6724 / Z-1310) protein is Small ribosomal subunit protein bS6.